The sequence spans 547 residues: Chaperonin GroEL (547 aa).

ATP contacts are provided by residues T30 to P33, K51, D87 to T91, G415, N479 to A481, and D495. Residues P525 to M547 form a disordered region. The span at A532–M547 shows a compositional bias: gly residues.

The protein belongs to the chaperonin (HSP60) family. As to quaternary structure, forms a cylinder of 14 subunits composed of two heptameric rings stacked back-to-back. Interacts with the co-chaperonin GroES.

The protein localises to the cytoplasm. It carries out the reaction ATP + H2O + a folded polypeptide = ADP + phosphate + an unfolded polypeptide.. In terms of biological role, together with its co-chaperonin GroES, plays an essential role in assisting protein folding. The GroEL-GroES system forms a nano-cage that allows encapsulation of the non-native substrate proteins and provides a physical environment optimized to promote and accelerate protein folding. This is Chaperonin GroEL from Nitrosomonas europaea (strain ATCC 19718 / CIP 103999 / KCTC 2705 / NBRC 14298).